Here is a 24-residue protein sequence, read N- to C-terminus: Humanin-like 12 (24 aa).

The protein belongs to the humanin family.

The protein localises to the secreted. The protein resides in the cytoplasm. Its function is as follows. Plays a role as a neuroprotective and antiapoptotic factor. The sequence is that of Humanin-like 12 from Homo sapiens (Human).